A 128-amino-acid polypeptide reads, in one-letter code: Large ribosomal subunit protein uL22 (128 aa).

This sequence belongs to the universal ribosomal protein uL22 family. As to quaternary structure, part of the 50S ribosomal subunit.

This protein binds specifically to 23S rRNA; its binding is stimulated by other ribosomal proteins, e.g. L4, L17, and L20. It is important during the early stages of 50S assembly. It makes multiple contacts with different domains of the 23S rRNA in the assembled 50S subunit and ribosome. Functionally, the globular domain of the protein is located near the polypeptide exit tunnel on the outside of the subunit, while an extended beta-hairpin is found that lines the wall of the exit tunnel in the center of the 70S ribosome. This Methylocella silvestris (strain DSM 15510 / CIP 108128 / LMG 27833 / NCIMB 13906 / BL2) protein is Large ribosomal subunit protein uL22.